The primary structure comprises 1196 residues: Phosphoglucan, water dikinase, chloroplastic (1196 aa).

The transit peptide at 1 to 54 (MESIGSHCCSSPFTFITRNSSSSLPRLVNITHRVNLSHQSHRLRNSNSRLTCTA) directs the protein to the chloroplast. Thr-55 is subject to N-acetylthreonine. In terms of domain architecture, CBM20 spans 66-166 (KKDGSGTKVR…NFSVVCHWDA (101 aa)). The interval 174 to 200 (PQEVGNDDDVGDGGHERDNHDVGDDRV) is disordered. The span at 185-200 (DGGHERDNHDVGDDRV) shows a compositional bias: basic and acidic residues. Residue His-759 is the Tele-phosphohistidine intermediate of the active site. The disordered stretch occupies residues 804–855 (LSTEGRSRTSKSSATKKTDKNSLSKKKTDKKSLSIDDEESKPGSSSSNSLLY).

Belongs to the PEP-utilizing enzyme family. In terms of assembly, homodimer. The cofactor is Mg(2+). In terms of tissue distribution, in all starch containing tissues (e.g. roots, leaves, stems, inflorescence and siliques).

It is found in the plastid. The protein resides in the chloroplast. The enzyme catalyses [(1-&gt;4)-6-phospho-alpha-D-glucosyl](n) + n ATP + n H2O = [(1-&gt;4)-3,6-bisphospho-alpha-D-glucosyl](n) + n AMP + n phosphate + 2n H(+). Mediates the incorporation of phosphate into starch-like phospho-alpha-glucan, mostly at the C-3 position of glucose units. Required for starch degradation, suggesting that the phosphate content of starch regulates its degradability. This Arabidopsis thaliana (Mouse-ear cress) protein is Phosphoglucan, water dikinase, chloroplastic (GWD3).